A 307-amino-acid polypeptide reads, in one-letter code: Acyl transferase (307 aa).

Active-site charge relay system residues include serine 116, aspartate 213, and histidine 243.

This sequence belongs to the LuxD family.

The protein operates within lipid metabolism; fatty acid reduction for biolumincescence. Functionally, acyl transferase is part of the fatty acid reductase system required for aldehyde biosynthesis; it produces fatty acids for the luminescent reaction. The sequence is that of Acyl transferase from Aliivibrio fischeri (strain MJ11) (Vibrio fischeri).